The following is a 548-amino-acid chain: MAKDIKFREDARARLEQGVNKLADTLKVTLGPKGRNVVLDKKFGSPQITNDGVTIARDIDLEDNYENMGAQLVKEVATQTNDVAGDGTTTATILAQAMVNEGIKNVTAGANPMIIRKGIQKAVDRAVEELQKNAVSVEDKESISQVASISANDEEVGKLIAEAMEKVGKDGVITVEESKSFKTDLNVVEGMQFDRGYVSPYMVTDNEKMEAHLEEPYILITDKKIGNIQEILPVLEKIVEQGKEVLLIAEDIEGEALATLVVNKLRGTFTCVGVKAPGFGDRRKAMLEDIAVLTGGQVISEDVGLELKNADISMLGRARQVTITKDDTTIVDGYGNEEDIQKRITQLRTQIEETTSDFDREKLEERLAKLAGGVAVVEVGAATETEMKEKKLRIEDALNSTRAAVEEGIVAGGGTALIDVLPSLEEVQADGDESTGVSIVRRALEEPVRQLAHNSGAEGSIVAEQVKQKGTNIGFNALENDYTNMLDAGVVDPKKVTRSALENAGSIAAMFLTTEAVVADLPDEDDNDDGDMGGGAPGMGGMGGMPGM.

Residues 29–32 (TLGP), 86–90 (DGTTT), G413, 476–478 (NAL), and D492 each bind ATP. The span at 522-531 (PDEDDNDDGD) shows a compositional bias: acidic residues. The segment at 522–548 (PDEDDNDDGDMGGGAPGMGGMGGMPGM) is disordered. The segment covering 532–548 (MGGGAPGMGGMGGMPGM) has biased composition (gly residues).

The protein belongs to the chaperonin (HSP60) family. As to quaternary structure, forms a cylinder of 14 subunits composed of two heptameric rings stacked back-to-back. Interacts with the co-chaperonin GroES.

Its subcellular location is the cytoplasm. It carries out the reaction ATP + H2O + a folded polypeptide = ADP + phosphate + an unfolded polypeptide.. Functionally, together with its co-chaperonin GroES, plays an essential role in assisting protein folding. The GroEL-GroES system forms a nano-cage that allows encapsulation of the non-native substrate proteins and provides a physical environment optimized to promote and accelerate protein folding. The chain is Chaperonin GroEL from Natranaerobius thermophilus (strain ATCC BAA-1301 / DSM 18059 / JW/NM-WN-LF).